A 266-amino-acid chain; its full sequence is 15-hydroxyprostaglandin dehydrogenase [NAD(+)] (266 aa).

Residues 12–20 (GAAQGIGRA), 36–37 (DW), 63–65 (CDV), and N91 contribute to the NAD(+) site. Positions 138 and 148 each coordinate substrate. Residue Y151 is the Proton acceptor of the active site. NAD(+) is bound by residues 151 to 155 (YCASK) and 186 to 188 (VDT).

Belongs to the short-chain dehydrogenases/reductases (SDR) family. In terms of assembly, homodimer.

It localises to the cytoplasm. It catalyses the reaction prostaglandin E2 + NAD(+) = 15-oxoprostaglandin E2 + NADH + H(+). It carries out the reaction (15S)-hydroxy-(5Z,8Z,11Z,13E)-eicosatetraenoate + NAD(+) = 15-oxo-(5Z,8Z,11Z,13E)-eicosatetraenoate + NADH + H(+). The enzyme catalyses (11R)-hydroxy-(5Z,8Z,12E,14Z)-eicosatetraenoate + NAD(+) = 11-oxo-(5Z,8Z,12E,14Z)-eicosatetraenoate + NADH + H(+). The catalysed reaction is lipoxin A4 + NAD(+) = 15-oxo-(5S,6R)-dihydroxy-(7E,9E,11Z,13E)-eicosatetraenoate + NADH + H(+). It catalyses the reaction 15-oxo-(5S,6R)-dihydroxy-(7E,9E,11Z)-eicosatrienoate + NADH + H(+) = (5S,6R,15S)-trihydroxy-(7E,9E,11Z)-eicosatrienoate + NAD(+). It carries out the reaction prostaglandin A1 + NAD(+) = 15-oxo-prostaglandin A1 + NADH + H(+). The enzyme catalyses prostaglandin E1 + NAD(+) = 15-oxoprostaglandin E1 + NADH + H(+). The catalysed reaction is 14-hydroxy-(4Z,7Z,10Z,12E,16Z,19Z)-docosahexaenoate + NAD(+) = 14-oxo-(4Z,7Z,10Z,12E,16Z,19Z)-docosahexaenoate + NADH + H(+). It catalyses the reaction resolvin E1 + NAD(+) = 18-oxo-resolvin E1 + NADH + H(+). It carries out the reaction resolvin D1 + NAD(+) = 8-oxoresolvin D1 + NADH + H(+). The enzyme catalyses resolvin D1 + NAD(+) = 17-oxoresolvin D1 + NADH + H(+). The catalysed reaction is resolvin D2 + NAD(+) = 7-oxoresolvin D2 + NADH + H(+). It catalyses the reaction resolvin D2 + NAD(+) = 16-oxoresolvin D2 + NADH + H(+). In terms of biological role, catalyzes the NAD-dependent dehydrogenation (oxidation) of a broad array of hydroxylated polyunsaturated fatty acids (mainly eicosanoids and docosanoids, including prostaglandins, lipoxins and resolvins), yielding their corresponding keto (oxo) metabolites. Decreases the levels of the pro-proliferative prostaglandins such as prostaglandin E2 (whose activity is increased in cancer because of an increase in the expression of cyclooxygenase 2) and generates oxo-fatty acid products that can profoundly influence cell function by abrogating pro-inflammatory cytokine expression. Converts resolvins E1, D1 and D2 to their oxo products, which represents a mode of resolvin inactivation. Resolvin E1 plays important roles during the resolution phase of acute inflammation, while resolvins D1 and D2 have a unique role in obesity-induced adipose inflammation. The polypeptide is 15-hydroxyprostaglandin dehydrogenase [NAD(+)] (HPGD) (Bos taurus (Bovine)).